We begin with the raw amino-acid sequence, 96 residues long: Small ribosomal subunit protein uS15 (96 aa).

This sequence belongs to the universal ribosomal protein uS15 family. As to quaternary structure, part of the 30S ribosomal subunit. Forms a bridge to the 50S subunit in the 70S ribosome, contacting the 23S rRNA.

Functionally, one of the primary rRNA binding proteins, it binds directly to 16S rRNA where it helps nucleate assembly of the platform of the 30S subunit by binding and bridging several RNA helices of the 16S rRNA. Its function is as follows. Forms an intersubunit bridge (bridge B4) with the 23S rRNA of the 50S subunit in the ribosome. This chain is Small ribosomal subunit protein uS15, found in Streptomyces griseus subsp. griseus (strain JCM 4626 / CBS 651.72 / NBRC 13350 / KCC S-0626 / ISP 5235).